Here is a 147-residue protein sequence, read N- to C-terminus: Large ribosomal subunit protein uL15 (147 aa).

A disordered region spans residues 1 to 46 (MSIRLENLSYTPGARKEKHRKGRGHAAGKGKQAGRGQSGQKKRSTV). Basic residues predominate over residues 16 to 28 (KEKHRKGRGHAAG).

The protein belongs to the universal ribosomal protein uL15 family. In terms of assembly, part of the 50S ribosomal subunit.

Its function is as follows. Binds to the 23S rRNA. This Mesomycoplasma hyopneumoniae (strain 232) (Mycoplasma hyopneumoniae) protein is Large ribosomal subunit protein uL15.